Reading from the N-terminus, the 631-residue chain is Phosphomethylpyrimidine synthase (631 aa).

Residues Asn-231, Met-260, Tyr-289, His-325, 345–347, 386–389, and Glu-425 each bind substrate; these read SRG and DGLR. Residue His-429 participates in Zn(2+) binding. Tyr-452 contacts substrate. Residue His-493 coordinates Zn(2+). [4Fe-4S] cluster is bound by residues Cys-573, Cys-576, and Cys-581.

The protein belongs to the ThiC family. In terms of assembly, homodimer. Requires [4Fe-4S] cluster as cofactor.

The catalysed reaction is 5-amino-1-(5-phospho-beta-D-ribosyl)imidazole + S-adenosyl-L-methionine = 4-amino-2-methyl-5-(phosphooxymethyl)pyrimidine + CO + 5'-deoxyadenosine + formate + L-methionine + 3 H(+). It participates in cofactor biosynthesis; thiamine diphosphate biosynthesis. Catalyzes the synthesis of the hydroxymethylpyrimidine phosphate (HMP-P) moiety of thiamine from aminoimidazole ribotide (AIR) in a radical S-adenosyl-L-methionine (SAM)-dependent reaction. In Acinetobacter baylyi (strain ATCC 33305 / BD413 / ADP1), this protein is Phosphomethylpyrimidine synthase.